A 358-amino-acid polypeptide reads, in one-letter code: Arginase (358 aa).

Mn(2+)-binding residues include His146, Asp174, His176, and Asp178. Substrate is bound by residues 176-180, 187-189, and Asp233; these read HADIN and SGN. Mn(2+)-binding residues include Asp280 and Asp282. Residues Thr294 and Glu325 each coordinate substrate.

This sequence belongs to the arginase family. Homohexamer. It depends on Mn(2+) as a cofactor.

The protein resides in the cytoplasm. It catalyses the reaction L-arginine + H2O = urea + L-ornithine. The protein operates within nitrogen metabolism; urea cycle; L-ornithine and urea from L-arginine: step 1/1. The sequence is that of Arginase (aga-1) from Neurospora crassa (strain ATCC 24698 / 74-OR23-1A / CBS 708.71 / DSM 1257 / FGSC 987).